The chain runs to 89 residues: LYR motif-containing protein 4 (89 aa).

This sequence belongs to the complex I LYR family.

It is found in the mitochondrion. It localises to the nucleus. It functions in the pathway cofactor biosynthesis; iron-sulfur cluster biosynthesis. Functionally, required for nuclear and mitochondrial iron-sulfur protein biosynthesis. The polypeptide is LYR motif-containing protein 4 (lyrm4) (Danio rerio (Zebrafish)).